A 402-amino-acid chain; its full sequence is Imidazolonepropionase (402 aa).

His66 and His68 together coordinate Fe(3+). His66 and His68 together coordinate Zn(2+). The 4-imidazolone-5-propanoate site is built by Arg75, Tyr138, and His171. An N-formimidoyl-L-glutamate-binding site is contributed by Tyr138. His236 provides a ligand contact to Fe(3+). His236 contacts Zn(2+). Gln239 is a 4-imidazolone-5-propanoate binding site. Asp311 contributes to the Fe(3+) binding site. Asp311 serves as a coordination point for Zn(2+). Residues Asn313 and Gly315 each coordinate N-formimidoyl-L-glutamate. Thr316 provides a ligand contact to 4-imidazolone-5-propanoate.

This sequence belongs to the metallo-dependent hydrolases superfamily. HutI family. Requires Zn(2+) as cofactor. It depends on Fe(3+) as a cofactor.

Its subcellular location is the cytoplasm. The catalysed reaction is 4-imidazolone-5-propanoate + H2O = N-formimidoyl-L-glutamate. Its pathway is amino-acid degradation; L-histidine degradation into L-glutamate; N-formimidoyl-L-glutamate from L-histidine: step 3/3. Catalyzes the hydrolytic cleavage of the carbon-nitrogen bond in imidazolone-5-propanoate to yield N-formimidoyl-L-glutamate. It is the third step in the universal histidine degradation pathway. The chain is Imidazolonepropionase from Pseudomonas aeruginosa (strain UCBPP-PA14).